A 426-amino-acid chain; its full sequence is MGGLPVSPKYVIKAKMEIKGSVEKHDIIGAIFGQAEGLLGSELDLRELQKTGRVGRIEVNTRSQDGTLVAEIEIPTNLDMAETAIIAATIESIDKVGPYPAKTEVVSIEDVRAEKRQKIIERAVELYKKLLESVPESRELVEEVLRRVRVAEIVEYGEEKLPGGPEVETSDTVILVEGRADVQNLLRHGYKNVIALGGATIPKSIKSLVENKKVILFVDGDRGGELIARNVINALKVDFVARAPPGREVEDLTAKEIARALQNKIPVDEFLQALEREKKQQKEVKAEIVVPPAKLIKSATKKNPEIAQEIVVPAEVYEKLEELKGTLEAVIYDENWQVVEKVPVRDLVNRLKEVERAAHVVLDGIITQRLVDVAYTKGLKSLIGVRIGEIIRKPDNIVLATFSSVKKSEENIQESVSTGESAQTSP.

One can recognise a Toprim domain in the interval 171–245 (DTVILVEGRA…KVDFVARAPP (75 aa)). Residues Glu177, Asp219, and Asp221 each contribute to the Mg(2+) site. The interval 407-426 (KSEENIQESVSTGESAQTSP) is disordered. Positions 413–426 (QESVSTGESAQTSP) are enriched in polar residues.

The protein belongs to the archaeal DnaG primase family. Forms a ternary complex with MCM helicase and DNA. Component of the archaeal exosome complex. The cofactor is Mg(2+).

The catalysed reaction is ssDNA + n NTP = ssDNA/pppN(pN)n-1 hybrid + (n-1) diphosphate.. Its function is as follows. RNA polymerase that catalyzes the synthesis of short RNA molecules used as primers for DNA polymerase during DNA replication. Also part of the exosome, which is a complex involved in RNA degradation. Acts as a poly(A)-binding protein that enhances the interaction between heteromeric, adenine-rich transcripts and the exosome. This is DNA primase DnaG from Thermofilum pendens (strain DSM 2475 / Hrk 5).